The following is a 492-amino-acid chain: UDP-N-acetylmuramoyl-L-alanyl-D-glutamate--2,6-diaminopimelate ligase (492 aa).

S30 provides a ligand contact to UDP-N-acetyl-alpha-D-muramoyl-L-alanyl-D-glutamate. Residue 114-120 (GTNGKTS) participates in ATP binding. UDP-N-acetyl-alpha-D-muramoyl-L-alanyl-D-glutamate is bound by residues 156–157 (TT), S183, Q189, and R191. K223 bears the N6-carboxylysine mark. Residues R389, 413 to 416 (DNPR), G462, and E466 each bind meso-2,6-diaminopimelate. A Meso-diaminopimelate recognition motif motif is present at residues 413–416 (DNPR).

This sequence belongs to the MurCDEF family. MurE subfamily. Mg(2+) serves as cofactor. Post-translationally, carboxylation is probably crucial for Mg(2+) binding and, consequently, for the gamma-phosphate positioning of ATP.

The protein localises to the cytoplasm. The catalysed reaction is UDP-N-acetyl-alpha-D-muramoyl-L-alanyl-D-glutamate + meso-2,6-diaminopimelate + ATP = UDP-N-acetyl-alpha-D-muramoyl-L-alanyl-gamma-D-glutamyl-meso-2,6-diaminopimelate + ADP + phosphate + H(+). Its pathway is cell wall biogenesis; peptidoglycan biosynthesis. Functionally, catalyzes the addition of meso-diaminopimelic acid to the nucleotide precursor UDP-N-acetylmuramoyl-L-alanyl-D-glutamate (UMAG) in the biosynthesis of bacterial cell-wall peptidoglycan. In Neisseria meningitidis serogroup A / serotype 4A (strain DSM 15465 / Z2491), this protein is UDP-N-acetylmuramoyl-L-alanyl-D-glutamate--2,6-diaminopimelate ligase.